The following is a 152-amino-acid chain: UPF0179 protein Mlab_1307 (152 aa).

The protein belongs to the UPF0179 family.

This Methanocorpusculum labreanum (strain ATCC 43576 / DSM 4855 / Z) protein is UPF0179 protein Mlab_1307.